Reading from the N-terminus, the 109-residue chain is Large ribosomal subunit protein uL24 (109 aa).

Belongs to the universal ribosomal protein uL24 family. Part of the 50S ribosomal subunit.

One of two assembly initiator proteins, it binds directly to the 5'-end of the 23S rRNA, where it nucleates assembly of the 50S subunit. Functionally, one of the proteins that surrounds the polypeptide exit tunnel on the outside of the subunit. The sequence is that of Large ribosomal subunit protein uL24 from Legionella pneumophila (strain Paris).